The primary structure comprises 182 residues: ATP-dependent protease subunit HslV (182 aa).

Threonine 12 is an active-site residue. Na(+) is bound by residues alanine 167, cysteine 170, and threonine 173.

The protein belongs to the peptidase T1B family. HslV subfamily. As to quaternary structure, a double ring-shaped homohexamer of HslV is capped on each side by a ring-shaped HslU homohexamer. The assembly of the HslU/HslV complex is dependent on binding of ATP.

The protein resides in the cytoplasm. The catalysed reaction is ATP-dependent cleavage of peptide bonds with broad specificity.. With respect to regulation, allosterically activated by HslU binding. Protease subunit of a proteasome-like degradation complex believed to be a general protein degrading machinery. The polypeptide is ATP-dependent protease subunit HslV (Chlorobium luteolum (strain DSM 273 / BCRC 81028 / 2530) (Pelodictyon luteolum)).